The sequence spans 273 residues: Large ribosomal subunit protein uL2cz/uL2cy (273 aa).

Disordered stretches follow at residues 1–20 (MAKH…TIDR) and 225–273 (PVDH…RRRK).

It belongs to the universal ribosomal protein uL2 family. In terms of assembly, part of the 50S ribosomal subunit.

The protein localises to the plastid. It localises to the chloroplast. The chain is Large ribosomal subunit protein uL2cz/uL2cy (rpl2-A) from Oryza nivara (Indian wild rice).